The chain runs to 155 residues: uncharacterized protein (155 aa).

Helical transmembrane passes span 2 to 24 (TFLFLILVFIIEILQLSVFPPIF), 62 to 84 (AVVNFLGFISLLNVVFTYLYLVL), 97 to 116 (VFLIMPLILLLRKLTIFLVV), and 131 to 148 (VVLLIDLIFLILLYKVFN).

The protein localises to the cell membrane. This is an uncharacterized protein from Aquifex aeolicus (strain VF5).